Consider the following 191-residue polypeptide: dTTP/UTP pyrophosphatase (191 aa).

Aspartate 64 (proton acceptor) is an active-site residue.

It belongs to the Maf family. YhdE subfamily. A divalent metal cation serves as cofactor.

It localises to the cytoplasm. The enzyme catalyses dTTP + H2O = dTMP + diphosphate + H(+). It catalyses the reaction UTP + H2O = UMP + diphosphate + H(+). Nucleoside triphosphate pyrophosphatase that hydrolyzes dTTP and UTP. May have a dual role in cell division arrest and in preventing the incorporation of modified nucleotides into cellular nucleic acids. The sequence is that of dTTP/UTP pyrophosphatase from Thermosipho africanus (strain TCF52B).